Here is a 172-residue protein sequence, read N- to C-terminus: NAD(P)H-quinone oxidoreductase subunit I, chloroplastic (172 aa).

2 consecutive 4Fe-4S ferredoxin-type domains span residues 55–84 (GRIH…VDWK) and 95–124 (LNYS…MTEE). Residues Cys-64, Cys-67, Cys-70, Cys-74, Cys-104, Cys-107, Cys-110, and Cys-114 each coordinate [4Fe-4S] cluster.

The protein belongs to the complex I 23 kDa subunit family. As to quaternary structure, NDH is composed of at least 16 different subunits, 5 of which are encoded in the nucleus. [4Fe-4S] cluster serves as cofactor.

It is found in the plastid. It localises to the chloroplast thylakoid membrane. It carries out the reaction a plastoquinone + NADH + (n+1) H(+)(in) = a plastoquinol + NAD(+) + n H(+)(out). The catalysed reaction is a plastoquinone + NADPH + (n+1) H(+)(in) = a plastoquinol + NADP(+) + n H(+)(out). Functionally, NDH shuttles electrons from NAD(P)H:plastoquinone, via FMN and iron-sulfur (Fe-S) centers, to quinones in the photosynthetic chain and possibly in a chloroplast respiratory chain. The immediate electron acceptor for the enzyme in this species is believed to be plastoquinone. Couples the redox reaction to proton translocation, and thus conserves the redox energy in a proton gradient. The sequence is that of NAD(P)H-quinone oxidoreductase subunit I, chloroplastic from Arabidopsis thaliana (Mouse-ear cress).